The sequence spans 308 residues: Cytochrome c biogenesis protein CcsA (308 aa).

7 helical membrane-spanning segments follow: residues 2-22, 44-64, 71-91, 143-163, 212-232, 239-259, and 273-293; these read IVSTLEHILTHISFSIVSILI, GMLVTFFCITGLLATHWIYLG, LSESLIFLSWSFALIHSIAYF, MILGYAALLCGSLLSVALMVI, VIGLGFIFLTIGILSGAVWAN, WSWDPKETWAFITWIVFAIYL, and AIVASIGFLIIWICYFGVNLV.

This sequence belongs to the CcmF/CycK/Ccl1/NrfE/CcsA family. May interact with Ccs1.

The protein localises to the plastid membrane. Functionally, required during biogenesis of c-type cytochromes (cytochrome c6 and cytochrome f) at the step of heme attachment. The polypeptide is Cytochrome c biogenesis protein CcsA (Cuscuta exaltata (Tall dodder)).